The primary structure comprises 100 residues: Urease subunit gamma (100 aa).

The protein belongs to the urease gamma subunit family. As to quaternary structure, heterotrimer of UreA (gamma), UreB (beta) and UreC (alpha) subunits. Three heterotrimers associate to form the active enzyme.

It is found in the cytoplasm. The catalysed reaction is urea + 2 H2O + H(+) = hydrogencarbonate + 2 NH4(+). Its pathway is nitrogen metabolism; urea degradation; CO(2) and NH(3) from urea (urease route): step 1/1. This chain is Urease subunit gamma, found in Clostridium perfringens.